Reading from the N-terminus, the 448-residue chain is Exodeoxyribonuclease 7 large subunit (448 aa).

It belongs to the XseA family. In terms of assembly, heterooligomer composed of large and small subunits.

Its subcellular location is the cytoplasm. It catalyses the reaction Exonucleolytic cleavage in either 5'- to 3'- or 3'- to 5'-direction to yield nucleoside 5'-phosphates.. Functionally, bidirectionally degrades single-stranded DNA into large acid-insoluble oligonucleotides, which are then degraded further into small acid-soluble oligonucleotides. This is Exodeoxyribonuclease 7 large subunit from Photobacterium profundum (strain SS9).